We begin with the raw amino-acid sequence, 363 residues long: MRLMISGGGTGGHIYPALALIDALKAHDPEAQVQFVGTHRGLESRIVPERGIDFKTIKIQGFKRSLSLQNVKTVYLFLKSVVTARKYIKAFKPDVVVGTGGYVSGAVVFAASQMHIPTVIHEQNSVVGVTNKFLSRFVDKIAISFESARSQFPAQKVVMTGNPRAQQVANIKKSGALAQFDLDPDIPTALIFGGSRGAARINAAAVAAIPELNKRDYQTLFVTGQVHYEKIRNGLSATALAPNVKIEPYIKNMPAILPEVAVILGRAGATSIAEITALGIPSILVPSPYVTNDHQTKNAQSLVNAGAAELIKEADLTGTSLVAALDGLLQSTTHRETMAANAKKLGMPDAADQLLHVLETVIK.

Residues 10–12 (TGG), N124, S195, I250, and Q295 contribute to the UDP-N-acetyl-alpha-D-glucosamine site.

This sequence belongs to the glycosyltransferase 28 family. MurG subfamily.

Its subcellular location is the cell membrane. The enzyme catalyses Mur2Ac(oyl-L-Ala-gamma-D-Glu-L-Lys-D-Ala-D-Ala)-di-trans,octa-cis-undecaprenyl diphosphate + UDP-N-acetyl-alpha-D-glucosamine = beta-D-GlcNAc-(1-&gt;4)-Mur2Ac(oyl-L-Ala-gamma-D-Glu-L-Lys-D-Ala-D-Ala)-di-trans,octa-cis-undecaprenyl diphosphate + UDP + H(+). It participates in cell wall biogenesis; peptidoglycan biosynthesis. Cell wall formation. Catalyzes the transfer of a GlcNAc subunit on undecaprenyl-pyrophosphoryl-MurNAc-pentapeptide (lipid intermediate I) to form undecaprenyl-pyrophosphoryl-MurNAc-(pentapeptide)GlcNAc (lipid intermediate II). The protein is UDP-N-acetylglucosamine--N-acetylmuramyl-(pentapeptide) pyrophosphoryl-undecaprenol N-acetylglucosamine transferase of Lactiplantibacillus plantarum (strain ATCC BAA-793 / NCIMB 8826 / WCFS1) (Lactobacillus plantarum).